Consider the following 101-residue polypeptide: Protein S100-A3 (101 aa).

Ala2 is subject to N-acetylalanine. EF-hand domains are found at residues 12–47 (IVCT…TWTP) and 50–85 (FREC…LCLY). Residues Lys28 and Glu33 each coordinate Ca(2+). Cys30 and Cys68 are oxidised to a cystine. Position 51 is a citrulline; by PAD3 (Arg51). Asp63, Asn65, Asp67, Glu69, and Glu74 together coordinate Ca(2+). The cysteines at positions 81 and 99 are disulfide-linked. Zn(2+) contacts are provided by Cys83, Cys86, His87, and Cys93.

Belongs to the S-100 family. As to quaternary structure, homodimer and homotetramer for the citrullinated form. Post-translationally, more than half of the arginine residues undergo citrullination by PAD1 and PAD2. Arg-51 is specifically citrullinated by PAD3 and promotes tetramerization. As to expression, skin specific, specifically expressed at the inner endocuticle of hair fibers.

It localises to the cytoplasm. In terms of biological role, binds both calcium and zinc. May be involved in calcium-dependent cuticle cell differentiation, hair shaft and hair cuticular barrier formation. The chain is Protein S100-A3 (S100A3) from Homo sapiens (Human).